The chain runs to 82 residues: Small ribosomal subunit protein bS18 (82 aa).

The protein belongs to the bacterial ribosomal protein bS18 family. As to quaternary structure, part of the 30S ribosomal subunit. Forms a tight heterodimer with protein bS6.

Functionally, binds as a heterodimer with protein bS6 to the central domain of the 16S rRNA, where it helps stabilize the platform of the 30S subunit. The protein is Small ribosomal subunit protein bS18 of Bartonella bacilliformis (strain ATCC 35685 / KC583 / Herrer 020/F12,63).